We begin with the raw amino-acid sequence, 378 residues long: Succinyl-diaminopimelate desuccinylase (378 aa).

His68 is a binding site for Zn(2+). Residue Asp70 is part of the active site. Asp101 lines the Zn(2+) pocket. Glu135 (proton acceptor) is an active-site residue. Residues Glu136, Glu164, and His350 each contribute to the Zn(2+) site.

It belongs to the peptidase M20A family. DapE subfamily. In terms of assembly, homodimer. Zn(2+) is required as a cofactor. It depends on Co(2+) as a cofactor.

The catalysed reaction is N-succinyl-(2S,6S)-2,6-diaminopimelate + H2O = (2S,6S)-2,6-diaminopimelate + succinate. It participates in amino-acid biosynthesis; L-lysine biosynthesis via DAP pathway; LL-2,6-diaminopimelate from (S)-tetrahydrodipicolinate (succinylase route): step 3/3. Catalyzes the hydrolysis of N-succinyl-L,L-diaminopimelic acid (SDAP), forming succinate and LL-2,6-diaminopimelate (DAP), an intermediate involved in the bacterial biosynthesis of lysine and meso-diaminopimelic acid, an essential component of bacterial cell walls. The protein is Succinyl-diaminopimelate desuccinylase of Acinetobacter baumannii (strain ACICU).